Consider the following 121-residue polypeptide: uncharacterized protein (121 aa).

Residues 85-111 (NANNDDYESPYKTPKIKSNPSLDSSGS) are disordered. The span at 100 to 111 (IKSNPSLDSSGS) shows a compositional bias: polar residues.

This is an uncharacterized protein from Dictyostelium discoideum (Social amoeba).